The sequence spans 328 residues: MNLVSLENFLDNTSFLVLFLTMLVYWAGAAFPSIPLLPGLGSTGVAIANLCIAALLGARWLEAGYFPISNLYESLFFLAWGVTAVHLIAEYTSRSRLVGVVTTPVAMGITAFATLSLPGEMQTSAPLVPALKSNWLMMHVSVMMLSYAALMVGSLMAIAFLIVTRGQNIELKGSSVGTGAYRLQNKLSTTLSAPIFMETANGGTTALLTPTLTAMATLSPQRLSLAETLDNISYRVIGLGFPLLTIGIIAGAVWANEAWGSYWSWDPKETWALITWLVFAAYLHARITRGWQGRKPAILAASGFVVVWVCYLGVNLLGKGLHSYGWFF.

Transmembrane regions (helical) follow at residues 15–35, 36–56, 68–88, 97–117, 142–162, 236–256, 263–283, and 297–317; these read FLVL…PSIP, LLPG…AALL, ISNL…VHLI, LVGV…TLSL, VMML…AFLI, VIGL…VWAN, WSWD…AAYL, and AILA…VNLL.

This sequence belongs to the CcmF/CycK/Ccl1/NrfE/CcsA family. In terms of assembly, may interact with ccs1.

The protein resides in the cellular thylakoid membrane. Its function is as follows. Required during biogenesis of c-type cytochromes (cytochrome c6 and cytochrome f) at the step of heme attachment. The sequence is that of Cytochrome c biogenesis protein CcsA from Microcystis aeruginosa (strain NIES-843 / IAM M-2473).